The chain runs to 545 residues: Light-independent protochlorophyllide reductase subunit N (545 aa).

The [4Fe-4S] cluster site is built by cysteine 102, cysteine 127, and cysteine 187.

The protein belongs to the BchN/ChlN family. Protochlorophyllide reductase is composed of three subunits; ChlL, ChlN and ChlB. Forms a heterotetramer of two ChlB and two ChlN subunits. Requires [4Fe-4S] cluster as cofactor.

Its subcellular location is the plastid. The protein resides in the chloroplast. The catalysed reaction is chlorophyllide a + oxidized 2[4Fe-4S]-[ferredoxin] + 2 ADP + 2 phosphate = protochlorophyllide a + reduced 2[4Fe-4S]-[ferredoxin] + 2 ATP + 2 H2O. The protein operates within porphyrin-containing compound metabolism; chlorophyll biosynthesis (light-independent). In terms of biological role, component of the dark-operative protochlorophyllide reductase (DPOR) that uses Mg-ATP and reduced ferredoxin to reduce ring D of protochlorophyllide (Pchlide) to form chlorophyllide a (Chlide). This reaction is light-independent. The NB-protein (ChlN-ChlB) is the catalytic component of the complex. This Chlamydomonas reinhardtii (Chlamydomonas smithii) protein is Light-independent protochlorophyllide reductase subunit N.